A 284-amino-acid polypeptide reads, in one-letter code: Bifunctional protein FolD (284 aa).

NADP(+)-binding positions include 165 to 167 (GRS), Ser-190, and Ile-231.

The protein belongs to the tetrahydrofolate dehydrogenase/cyclohydrolase family. Homodimer.

It carries out the reaction (6R)-5,10-methylene-5,6,7,8-tetrahydrofolate + NADP(+) = (6R)-5,10-methenyltetrahydrofolate + NADPH. The enzyme catalyses (6R)-5,10-methenyltetrahydrofolate + H2O = (6R)-10-formyltetrahydrofolate + H(+). It participates in one-carbon metabolism; tetrahydrofolate interconversion. Catalyzes the oxidation of 5,10-methylenetetrahydrofolate to 5,10-methenyltetrahydrofolate and then the hydrolysis of 5,10-methenyltetrahydrofolate to 10-formyltetrahydrofolate. The polypeptide is Bifunctional protein FolD (Clostridium kluyveri (strain ATCC 8527 / DSM 555 / NBRC 12016 / NCIMB 10680 / K1)).